A 320-amino-acid chain; its full sequence is Cytochrome c biogenesis protein CcsA (320 aa).

8 helical membrane-spanning segments follow: residues 13–33 (ISFSVVSIVITIHFLTLFLLV), 46–66 (GMIVTFFCITGLLVTRWIYSG), 73–93 (LYESLIFLSWGFSLIHMVSYL), 102–122 (LSAITAPSAIFTQGFATSGLL), 147–167 (MVLGYAALLCGSLLSVALLVI), 226–246 (IISLGFIFLTIGILSGAVWAN), 259–274 (ETWAFITWTVFAIYFH), and 289–309 (VASMGFLIIWICYFGVNLLGI).

Belongs to the CcmF/CycK/Ccl1/NrfE/CcsA family. In terms of assembly, may interact with Ccs1.

It localises to the plastid. Its subcellular location is the chloroplast thylakoid membrane. Its function is as follows. Required during biogenesis of c-type cytochromes (cytochrome c6 and cytochrome f) at the step of heme attachment. The polypeptide is Cytochrome c biogenesis protein CcsA (Gossypium hirsutum (Upland cotton)).